We begin with the raw amino-acid sequence, 468 residues long: UDP-N-acetylmuramate--L-alanine ligase (468 aa).

121–127 (GSHGKTT) contributes to the ATP binding site.

It belongs to the MurCDEF family.

Its subcellular location is the cytoplasm. It carries out the reaction UDP-N-acetyl-alpha-D-muramate + L-alanine + ATP = UDP-N-acetyl-alpha-D-muramoyl-L-alanine + ADP + phosphate + H(+). It participates in cell wall biogenesis; peptidoglycan biosynthesis. In terms of biological role, cell wall formation. This is UDP-N-acetylmuramate--L-alanine ligase from Borreliella afzelii (strain PKo) (Borrelia afzelii).